The sequence spans 571 residues: Proline--tRNA ligase (571 aa).

Belongs to the class-II aminoacyl-tRNA synthetase family. ProS type 1 subfamily. In terms of assembly, homodimer.

The protein localises to the cytoplasm. The enzyme catalyses tRNA(Pro) + L-proline + ATP = L-prolyl-tRNA(Pro) + AMP + diphosphate. In terms of biological role, catalyzes the attachment of proline to tRNA(Pro) in a two-step reaction: proline is first activated by ATP to form Pro-AMP and then transferred to the acceptor end of tRNA(Pro). As ProRS can inadvertently accommodate and process non-cognate amino acids such as alanine and cysteine, to avoid such errors it has two additional distinct editing activities against alanine. One activity is designated as 'pretransfer' editing and involves the tRNA(Pro)-independent hydrolysis of activated Ala-AMP. The other activity is designated 'posttransfer' editing and involves deacylation of mischarged Ala-tRNA(Pro). The misacylated Cys-tRNA(Pro) is not edited by ProRS. The polypeptide is Proline--tRNA ligase (Actinobacillus succinogenes (strain ATCC 55618 / DSM 22257 / CCUG 43843 / 130Z)).